Consider the following 735-residue polypeptide: 5-methyltetrahydropteroyltriglutamate--homocysteine methyltransferase (735 aa).

5-methyltetrahydropteroyltri-L-glutamate contacts are provided by residues arginine 15–lysine 18 and lysine 104. L-homocysteine-binding positions include isoleucine 409 to serine 411 and glutamate 462. L-methionine is bound by residues isoleucine 409–serine 411 and glutamate 462. Residues arginine 493–cysteine 494 and tryptophan 539 each bind 5-methyltetrahydropteroyltri-L-glutamate. Aspartate 577 serves as a coordination point for L-homocysteine. Aspartate 577 is an L-methionine binding site. Glutamate 583 is a 5-methyltetrahydropteroyltri-L-glutamate binding site. Zn(2+) is bound by residues histidine 618, cysteine 620, and glutamate 642. The Proton donor role is filled by histidine 672. Residue cysteine 704 participates in Zn(2+) binding.

It belongs to the vitamin-B12 independent methionine synthase family. Zn(2+) is required as a cofactor.

It catalyses the reaction 5-methyltetrahydropteroyltri-L-glutamate + L-homocysteine = tetrahydropteroyltri-L-glutamate + L-methionine. It participates in amino-acid biosynthesis; L-methionine biosynthesis via de novo pathway; L-methionine from L-homocysteine (MetE route): step 1/1. Catalyzes the transfer of a methyl group from 5-methyltetrahydrofolate to homocysteine resulting in methionine formation. The polypeptide is 5-methyltetrahydropteroyltriglutamate--homocysteine methyltransferase (Thermotoga petrophila (strain ATCC BAA-488 / DSM 13995 / JCM 10881 / RKU-1)).